Reading from the N-terminus, the 461-residue chain is A-type ATP synthase subunit B (461 aa).

It belongs to the ATPase alpha/beta chains family. In terms of assembly, has multiple subunits with at least A(3), B(3), C, D, E, F, H, I and proteolipid K(x).

It localises to the cell membrane. Its function is as follows. Component of the A-type ATP synthase that produces ATP from ADP in the presence of a proton gradient across the membrane. The B chain is a regulatory subunit. The protein is A-type ATP synthase subunit B of Methanoculleus marisnigri (strain ATCC 35101 / DSM 1498 / JR1).